Here is a 351-residue protein sequence, read N- to C-terminus: SLAM family member 6 (351 aa).

The first 30 residues, 1 to 30, serve as a signal peptide directing secretion; the sequence is MAVSRAPAPDSACQRMVWLFPLVFCLGSGS. At 31-239 the chain is on the extracellular side; the sequence is EVSQSSSDPQ…KGVLTNPPWN (209 aa). The Ig-like V-type domain maps to 36-130; that stretch reads SSDPQLMNGV…YTAQITTKDS (95 aa). N-linked (GlcNAc...) asparagine glycans are attached at residues N82, N101, N112, N152, N159, N172, N186, N193, and N218. The Ig-like C2-type domain maps to 147-210; that stretch reads NLETTNYTLL…RNSGDQTYVC (64 aa). Intrachain disulfides connect C162-C229 and C168-C210. A helical transmembrane segment spans residues 240–262; sequence AVWFMTTISIISAVILIFVCWSI. Residues 263 to 351 lie on the Cytoplasmic side of the membrane; that stretch reads HVWKRRGSLP…KVNTLINYNS (89 aa). Positions 272-295 are disordered; that stretch reads PLTSQHPESSQSTDGPGSPGNTVY. 2 short sequence motifs (ITSM) span residues 293–298 and 317–322; these read TVYAQV and TIYSIV. Y319 carries the post-translational modification Phosphotyrosine.

In terms of assembly, homodimer. Interacts with PTN6 and, upon phosphorylation, with PTN11 and SH2D1A/SAP. Post-translationally, phosphorylated. As to expression, expressed on hematopoietic cells. Isoform 3 is expressed in thymocytes and B lymphocytes of C57Bl/6 strain.

It is found in the cell membrane. In terms of biological role, self-ligand receptor of the signaling lymphocytic activation molecule (SLAM) family. SLAM receptors triggered by homo- or heterotypic cell-cell interactions are modulating the activation and differentiation of a wide variety of immune cells and thus are involved in the regulation and interconnection of both innate and adaptive immune response. Activities are controlled by presence or absence of small cytoplasmic adapter proteins, SH2D1A/SAP and/or SH2D1B/EAT-2. Triggers cytolytic activity only in natural killer cells (NK) expressing high surface densities of natural cytotoxicity receptors. Positive signaling in NK cells implicates phosphorylation of VAV1. NK cell activation seems to depend on SH2D1B and not on SH2D1A. In conjunction with SLAMF1 controls the transition between positive selection and the subsequent expansion and differentiation of the thymocytic natural killer T (NKT) cell lineage. Promotes T cell differentiation into a helper T-cell Th17 phenotype leading to increased IL-17 secretion; the costimulatory activity requires SH2D1A. Promotes recruitment of RORC to the IL-17 promoter. In conjunction with SLAMF1 and CD84/SLAMF5 may be a negative regulator of the humoral immune response. In the absence of SH2D1A/SAP can transmit negative signals to CD4(+) T-cells and NKT cells. Negatively regulates germinal center formation by inhibiting T-cell:B-cell adhesion; the function probably implicates increased association with PTPN6/SHP-1 via ITSMs in absence of SH2D1A/SAP. However, reported to mediated T-cell adhesion, to participate in stable T-cell:B-cell interactions and to be involved in maintaining B-cell tolerance in germinal centers and in preventing autoimmunity. Involved in regulation of autoimmunity. Isoform 3 may be suppressor of pathogenic T-cell proliferation. This chain is SLAM family member 6 (Slamf6), found in Mus musculus (Mouse).